The chain runs to 507 residues: Extracellular elastase (507 aa).

The signal sequence occupies residues 1–28 (MKNFSKFALTSIAALTVASPLVNTEVDA). A propeptide spanning residues 29-207 (KDKVSATQNI…VVDKLNMIKE (179 aa)) is cleaved from the precursor. Asp347 contacts Ca(2+). His351 lines the Zn(2+) pocket. The active site involves Glu352. The Zn(2+) site is built by His355 and Glu375. Ca(2+)-binding residues include Asp386, Glu388, Asp389, Leu391, Glu394, Tyr397, Thr398, Val401, and Asp404. The active-site Proton donor is the His435.

Belongs to the peptidase M4 family. It depends on Ca(2+) as a cofactor. The cofactor is Zn(2+).

It localises to the secreted. In terms of biological role, protease that has a low substrate specificity. Glucagon is preferentially cleaved between aromatic (Phe) and hydrophobic (Val) amino acids. Hydrolyzes casein and elastin. In Staphylococcus epidermidis, this protein is Extracellular elastase (sepA).